The chain runs to 401 residues: Adenylosuccinate synthetase (401 aa).

Residues 12–18 (GDEGKGK) and 40–42 (GHT) contribute to the GTP site. D13 serves as the catalytic Proton acceptor. Mg(2+)-binding residues include D13 and G40. Residues 13–16 (DEGK), 38–41 (NAGH), T128, R142, Q212, T227, and R290 each bind IMP. The active-site Proton donor is H41. A substrate-binding site is contributed by 286–292 (ATTRRPR). GTP contacts are provided by residues R292, 318-320 (KAD), and 390-392 (STG).

It belongs to the adenylosuccinate synthetase family. In terms of assembly, homodimer. Requires Mg(2+) as cofactor.

The protein resides in the cytoplasm. The enzyme catalyses IMP + L-aspartate + GTP = N(6)-(1,2-dicarboxyethyl)-AMP + GDP + phosphate + 2 H(+). Its pathway is purine metabolism; AMP biosynthesis via de novo pathway; AMP from IMP: step 1/2. Plays an important role in the de novo pathway of purine nucleotide biosynthesis. Catalyzes the first committed step in the biosynthesis of AMP from IMP. The chain is Adenylosuccinate synthetase from Pseudothermotoga lettingae (strain ATCC BAA-301 / DSM 14385 / NBRC 107922 / TMO) (Thermotoga lettingae).